The chain runs to 62 residues: MARYRHSRSRSRSRYRRRRRRRSRYRSRRRRYRGRRRRRSRRGRRRRGYSCRRYSRRRRRRY.

A disordered region spans residues 1–62; the sequence is MARYRHSRSR…RYSRRRRRRY (62 aa).

It belongs to the protamine P1 family. In terms of tissue distribution, testis.

The protein localises to the nucleus. Its subcellular location is the chromosome. Its function is as follows. Protamines substitute for histones in the chromatin of sperm during the haploid phase of spermatogenesis. They compact sperm DNA into a highly condensed, stable and inactive complex. The chain is Sperm protamine P1 (PRM1) from Thylogale stigmatica (Red-legged pademelon).